An 85-amino-acid polypeptide reads, in one-letter code: Small cysteine and glycine repeat-containing protein 5 (85 aa).

The interval 4–69 (CGCGGCGGCG…TCCSCGCGCG (66 aa)) is 10 X 2 AA repeats of CG.

The protein belongs to the KRTAP type 28 family.

Its function is as follows. In the hair cortex, hair keratin intermediate filaments are embedded in an interfilamentous matrix, consisting of hair keratin-associated proteins (KRTAP), which are essential for the formation of a rigid and resistant hair shaft through their extensive disulfide bond cross-linking with abundant cysteine residues of hair keratins. The matrix proteins include the high-sulfur and high-glycine-tyrosine keratins. This chain is Small cysteine and glycine repeat-containing protein 5, found in Homo sapiens (Human).